A 336-amino-acid chain; its full sequence is Homoserine O-acetyltransferase (336 aa).

The region spanning 58–321 is the AB hydrolase-1 domain; sequence AILVLHALTG…PHGHDAFLID (264 aa). Ser-147 acts as the Nucleophile in catalysis. Substrate is bound at residue Arg-204. Residues Asp-286 and His-315 contribute to the active site. A substrate-binding site is contributed by Asp-316.

Belongs to the AB hydrolase superfamily. MetX family. In terms of assembly, homodimer.

The protein resides in the cytoplasm. The catalysed reaction is L-homoserine + acetyl-CoA = O-acetyl-L-homoserine + CoA. It functions in the pathway amino-acid biosynthesis; L-methionine biosynthesis via de novo pathway; O-acetyl-L-homoserine from L-homoserine: step 1/1. Its function is as follows. Transfers an acetyl group from acetyl-CoA to L-homoserine, forming acetyl-L-homoserine. The chain is Homoserine O-acetyltransferase from Deinococcus geothermalis (strain DSM 11300 / CIP 105573 / AG-3a).